The following is a 260-amino-acid chain: Type III pantothenate kinase (260 aa).

An ATP-binding site is contributed by 6–13 (DAGNTRTK). Residues tyrosine 88 and 95-98 (GVDR) each bind substrate. The active-site Proton acceptor is the aspartate 97. Residue serine 121 participates in ATP binding. Residue threonine 184 coordinates substrate.

Belongs to the type III pantothenate kinase family. As to quaternary structure, homodimer. The cofactor is NH4(+). It depends on K(+) as a cofactor.

It localises to the cytoplasm. The enzyme catalyses (R)-pantothenate + ATP = (R)-4'-phosphopantothenate + ADP + H(+). It functions in the pathway cofactor biosynthesis; coenzyme A biosynthesis; CoA from (R)-pantothenate: step 1/5. Its function is as follows. Catalyzes the phosphorylation of pantothenate (Pan), the first step in CoA biosynthesis. The polypeptide is Type III pantothenate kinase (Saccharophagus degradans (strain 2-40 / ATCC 43961 / DSM 17024)).